Consider the following 673-residue polypeptide: DNA ligase (673 aa).

NAD(+)-binding positions include 33-37 (DYEYD), 82-83 (SL), and glutamate 113. Lysine 115 functions as the N6-AMP-lysine intermediate in the catalytic mechanism. The NAD(+) site is built by arginine 136, glutamate 170, lysine 285, and lysine 309. Zn(2+) is bound by residues cysteine 403, cysteine 406, cysteine 421, and cysteine 426. One can recognise a BRCT domain in the interval 583–672 (AKSDILKGYT…SREEAEKILM (90 aa)).

It belongs to the NAD-dependent DNA ligase family. LigA subfamily. The cofactor is Mg(2+). Mn(2+) is required as a cofactor.

It carries out the reaction NAD(+) + (deoxyribonucleotide)n-3'-hydroxyl + 5'-phospho-(deoxyribonucleotide)m = (deoxyribonucleotide)n+m + AMP + beta-nicotinamide D-nucleotide.. In terms of biological role, DNA ligase that catalyzes the formation of phosphodiester linkages between 5'-phosphoryl and 3'-hydroxyl groups in double-stranded DNA using NAD as a coenzyme and as the energy source for the reaction. It is essential for DNA replication and repair of damaged DNA. The polypeptide is DNA ligase (Caldicellulosiruptor bescii (strain ATCC BAA-1888 / DSM 6725 / KCTC 15123 / Z-1320) (Anaerocellum thermophilum)).